A 312-amino-acid chain; its full sequence is Ribonuclease Z (312 aa).

Residues histidine 61, histidine 63, aspartate 65, histidine 66, histidine 148, aspartate 216, and histidine 275 each contribute to the Zn(2+) site. Aspartate 65 functions as the Proton acceptor in the catalytic mechanism.

The protein belongs to the RNase Z family. In terms of assembly, homodimer. Requires Zn(2+) as cofactor.

The enzyme catalyses Endonucleolytic cleavage of RNA, removing extra 3' nucleotides from tRNA precursor, generating 3' termini of tRNAs. A 3'-hydroxy group is left at the tRNA terminus and a 5'-phosphoryl group is left at the trailer molecule.. Its function is as follows. Zinc phosphodiesterase, which displays some tRNA 3'-processing endonuclease activity. Probably involved in tRNA maturation, by removing a 3'-trailer from precursor tRNA. This is Ribonuclease Z from Clostridium tetani (strain Massachusetts / E88).